Reading from the N-terminus, the 175-residue chain is Peptide deformylase (175 aa).

The Fe cation site is built by Cys-99 and His-141. Glu-142 is an active-site residue. His-145 lines the Fe cation pocket.

Belongs to the polypeptide deformylase family. Requires Fe(2+) as cofactor.

It catalyses the reaction N-terminal N-formyl-L-methionyl-[peptide] + H2O = N-terminal L-methionyl-[peptide] + formate. Functionally, removes the formyl group from the N-terminal Met of newly synthesized proteins. Requires at least a dipeptide for an efficient rate of reaction. N-terminal L-methionine is a prerequisite for activity but the enzyme has broad specificity at other positions. In Rickettsia prowazekii (strain Madrid E), this protein is Peptide deformylase.